A 193-amino-acid polypeptide reads, in one-letter code: Achaete-scute homolog 2 (193 aa).

3 disordered regions span residues 1 to 27, 37 to 56, and 118 to 177; these read MDGG…RRPA, RRRP…ARRN, and GGLR…GALS. Residues 50-102 enclose the bHLH domain; the sequence is AAVARRNERERNRVKLVNLGFQALRQHVPHGGASKKLSKVETLRSAVEYIRAL. Positions 140–150 are enriched in low complexity; sequence AASPSRASSSP.

As to quaternary structure, efficient DNA binding requires dimerization with another basic helix-loop-helix (bHLH) protein. Forms heterodimers with bHLH transcription factor TCF3. May not heterodimerise with bHLH protein HAND1. In terms of tissue distribution, expressed in the placenta at a stage between the first and second trimesters and when it matures, at about 32-36 weeks. Expressed in the extravillous trophoblasts, the intermediate trophoblasts, and at lower levels in the cytotrophoblasts and stroma of chorionic villi of the developing placenta. Expressed in follicular T-helper (Tfh) cells.

The protein localises to the nucleus. Its function is as follows. Transcription factor. Binds to E-box motifs 5'-CANNTG-3' in the regulatory elements of target genes, probably as a heterodimer with another basic helix-loop-helix (bHLH) protein such as the transcription factor TCF3. May bind both open and closed chromatin, acting as a pioneer transcription factor to allow other factors to bind and activate lineage-specific genes. Required during post-implantation development for the generation of some differentiated trophoblast cell types. Transcriptional activity of ASCL2 may be antagonised in a subset of trophoblast cells by bHLH transcription factor HAND1, perhaps by competing for dimerization with other bHLH proteins. Involved in differentiation and function of follicular T-helper (Tfh) cells, thereby playing a role in germinal center responses; probably modulates expression of genes involved in Tfh cell function, such as BCL6. May also act as a suppressor of Th1-, Th2- and Th17-cell differentiation. Induces the formation of stem cells in intestinal crypts in vitro, synergistically activating transcription of target genes, such as SOX9, together with TCF4/beta-catenin. May form a bistable transcriptional switch, controlling expression of its own gene together with Wnt/R-spondin signaling, and thereby maintaining stem cell characteristics. Modulates expression of target genes, including perhaps down-regulating EGR1/Krox24 and chemokine CXCL10/Mob-1 and up-regulating CXCR4 and CDKN1C/p57kip2, in Schwann cells. May play a role in reducing proliferation of Schwann cells, perhaps acting via modulation of expression of CDKN1C. May be dispensable for blastocyst formation and later embryonic function. May be involved in the determination of neuronal precursors. This is Achaete-scute homolog 2 (ASCL2) from Homo sapiens (Human).